Consider the following 495-residue polypeptide: tRNA-guanine(15) transglycosylase (495 aa).

Catalysis depends on aspartate 83, which acts as the Nucleophile. Substrate is bound at residue aspartate 118. Zn(2+) contacts are provided by cysteine 273 and cysteine 278.

The protein belongs to the archaeosine tRNA-ribosyltransferase family. Requires Zn(2+) as cofactor.

The catalysed reaction is guanosine(15) in tRNA + 7-cyano-7-deazaguanine = 7-cyano-7-carbaguanosine(15) in tRNA + guanine. It participates in tRNA modification; archaeosine-tRNA biosynthesis. Its function is as follows. Exchanges the guanine residue with 7-cyano-7-deazaguanine (preQ0) at position 15 in the dihydrouridine loop (D-loop) of archaeal tRNAs. In Pyrobaculum aerophilum (strain ATCC 51768 / DSM 7523 / JCM 9630 / CIP 104966 / NBRC 100827 / IM2), this protein is tRNA-guanine(15) transglycosylase.